A 727-amino-acid chain; its full sequence is Elongation factor 2 (727 aa).

The 242-residue stretch at 19–260 (DQIRNMGICA…MAIKHLPNPL (242 aa)) folds into the tr-type G domain. GTP-binding positions include 28 to 35 (AHIDHGKT), 94 to 98 (DTPGH), and 148 to 151 (NKVD). Histidine 603 carries the post-translational modification Diphthamide.

This sequence belongs to the TRAFAC class translation factor GTPase superfamily. Classic translation factor GTPase family. EF-G/EF-2 subfamily.

Its subcellular location is the cytoplasm. Catalyzes the GTP-dependent ribosomal translocation step during translation elongation. During this step, the ribosome changes from the pre-translocational (PRE) to the post-translocational (POST) state as the newly formed A-site-bound peptidyl-tRNA and P-site-bound deacylated tRNA move to the P and E sites, respectively. Catalyzes the coordinated movement of the two tRNA molecules, the mRNA and conformational changes in the ribosome. The chain is Elongation factor 2 from Methanococcus maripaludis (strain C7 / ATCC BAA-1331).